Here is a 609-residue protein sequence, read N- to C-terminus: Ovochymase-2 (609 aa).

The N-terminal stretch at 1 to 22 is a signal peptide; that stretch reads MPISKDKLILILGMVCLEQGHS. Positions 23-51 are cleaved as a propeptide — activation peptide; the sequence is ETLSSIRNPDCGQSLVKPQPQNYFSLFSR. Residues 52 to 299 enclose the Peptidase S1 domain; sequence IVGGSQVEKG…VLPWILKHIQ (248 aa). An intrachain disulfide couples Cys77 to Cys93. The active-site Charge relay system is the His92. N-linked (GlcNAc...) asparagine glycosylation is present at Asn104. Glu119 provides a ligand contact to Ca(2+). Catalysis depends on Asp142, which acts as the Charge relay system. 4 disulfide bridges follow: Cys176/Cys246, Cys207/Cys225, Cys236/Cys265, and Cys311/Cys341. Ser240 functions as the Charge relay system in the catalytic mechanism. CUB domains follow at residues 311-421 and 431-543; these read CSEP…YKAL and CRSL…ISFI. Asn356 carries N-linked (GlcNAc...) asparagine glycosylation. An intrachain disulfide couples Cys365 to Cys384. N-linked (GlcNAc...) asparagine glycosylation occurs at Asn415. 2 disulfides stabilise this stretch: Cys431/Cys458 and Cys485/Cys506. Asn530 and Asn549 each carry an N-linked (GlcNAc...) asparagine glycan. The tract at residues 580–609 is disordered; that stretch reads HTKPPYEEDIGEMPAIDSGLLKQGERRGKH.

This sequence belongs to the peptidase S1 family. In terms of tissue distribution, only expressed in uterus tissue. Expressed in the initial segment (IS) of the caput epididymis, the region most proximal to the testis.

It is found in the secreted. Functionally, may be required for sperm ADAM3 processing and consequential sperm fertilizing ability. In vitro, has an endopeptidase activity. The chain is Ovochymase-2 from Mus musculus (Mouse).